A 255-amino-acid polypeptide reads, in one-letter code: Acetylglutamate kinase (255 aa).

Residues 40-41 (GG), R62, and N153 contribute to the substrate site.

This sequence belongs to the acetylglutamate kinase family. ArgB subfamily.

The protein localises to the cytoplasm. It catalyses the reaction N-acetyl-L-glutamate + ATP = N-acetyl-L-glutamyl 5-phosphate + ADP. The protein operates within amino-acid biosynthesis; L-arginine biosynthesis; N(2)-acetyl-L-ornithine from L-glutamate: step 2/4. Its function is as follows. Catalyzes the ATP-dependent phosphorylation of N-acetyl-L-glutamate. The chain is Acetylglutamate kinase from Bacillus cereus (strain AH187).